The sequence spans 401 residues: MEGNKSMQREKIDRPMKRGPEQNSLSPPLAKCPFMSCSSLKTLHSLYQGSFPFYRLPSEVGHFSLDENRQYHQDNRKLRYYSPPVGIREKGSPGWNVMDGYESHYVRRNEDEKEGLLHILTWLEKNRGVLGAHVEGGSKRPIDRDFVTWRGHLTKILCTPYETQEGWLLAVTLFKGTFYISEQETEAAQKKRKERSLEQERLMYSGYKFESYICADSPDRQPSQSAVVNTNEGFCSVLLARLTSHSLLISGEVDCTDPSAKKSIPPTCYIELKSSAQIRNPHQQRSFNRYKLLKWWCQSFLLGIPIIVAGFRSPEGRIVSLETFKTSDIPHLVRGERNSWDPAVCMNFCNKFLSHIKSVVTRDDPRLVYLFAWEPGCDVTFTVHTDPEYTILPSWYVNSVN.

Positions 1-27 are disordered; it reads MEGNKSMQREKIDRPMKRGPEQNSLSP. Residues 7 to 20 are compositionally biased toward basic and acidic residues; sequence MQREKIDRPMKRGP. Substrate-binding positions include arginine 69, glutamate 114, and 149–151; that span reads WRG. Position 210 (glutamate 210) interacts with Mg(2+). Residues cysteine 235 and glutamate 252 each contribute to the substrate site. Glutamate 252, aspartate 254, glutamate 271, and leucine 272 together coordinate Mg(2+). Residues lysine 273 and glutamine 298 each coordinate substrate.

The protein belongs to the DXO/Dom3Z family. Requires Mg(2+) as cofactor.

The protein resides in the nucleus. The catalysed reaction is a 5'-end triphospho-ribonucleoside in mRNA + H2O = a 5'-end phospho-ribonucleoside in mRNA + diphosphate + H(+). It catalyses the reaction a 5'-end NAD(+)-phospho-ribonucleoside in mRNA + H2O = a 5'-end phospho-ribonucleoside in mRNA + NAD(+) + H(+). It carries out the reaction a 5'-end NAD(+)-phospho-ribonucleoside in snoRNA + H2O = a 5'-end phospho-ribonucleoside in snoRNA + NAD(+) + H(+). The enzyme catalyses a 5'-end (N(7)-methyl 5'-triphosphoguanosine)-ribonucleoside-ribonucleotide in mRNA + H2O = a (N(7)-methyl 5'-triphosphoguanosine)-nucleoside + a 5'-end phospho-ribonucleoside in mRNA + H(+). The catalysed reaction is a 5'-end FAD-phospho-ribonucleoside in mRNA + H2O = a 5'-end phospho-ribonucleoside in mRNA + FAD + H(+). It catalyses the reaction a 5'-end CoA-ribonucleoside in mRNA + H2O = 3'-dephospho-CoA + a 5'-end phospho-ribonucleoside in mRNA + H(+). In terms of biological role, decapping enzyme for NAD-capped RNAs: specifically hydrolyzes the nicotinamide adenine dinucleotide (NAD) cap from a subset of RNAs by removing the entire NAD moiety from the 5'-end of an NAD-capped RNA. The NAD-cap is present at the 5'-end of some RNAs and snoRNAs. In contrast to the canonical 5'-end N7 methylguanosine (m7G) cap, the NAD cap promotes mRNA decay. Also acts as a non-canonical decapping enzyme that removes the entire cap structure of m7G capped or incompletely capped RNAs and mediates their subsequent degradation. Specifically degrades pre-mRNAs with a defective 5'-end m7G cap and is part of a pre-mRNA capping quality control. Has decapping activity toward incomplete 5'-end m7G cap mRNAs such as unmethylated 5'-end-capped RNA (cap0), while it has no activity toward 2'-O-ribose methylated m7G cap (cap1). Also has 5'-3' exoribonuclease activities: The 5'-end monophosphate RNA is then degraded by the 5'-3' exoribonuclease activity, enabling this enzyme to decap and degrade incompletely capped mRNAs. Also possesses RNA 5'-pyrophosphohydrolase activity by hydrolyzing the 5'-end triphosphate to release pyrophosphates. Exhibits decapping activity towards FAD-capped RNAs. Exhibits decapping activity towards dpCoA-capped RNAs in vitro. The chain is Decapping and exoribonuclease protein from Xenopus laevis (African clawed frog).